We begin with the raw amino-acid sequence, 342 residues long: Putative TPR repeat-containing protein R856 (342 aa).

TPR repeat units lie at residues valine 36–glycine 69, phenylalanine 77–methionine 110, valine 119–leucine 152, alanine 161–lysine 194, alanine 203–isoleucine 236, alanine 245–valine 278, and alanine 291–threonine 324.

This Acanthamoeba polyphaga mimivirus (APMV) protein is Putative TPR repeat-containing protein R856.